The primary structure comprises 364 residues: DNA replication and repair protein RecF (364 aa).

30–37 (GRNAQGKT) is a binding site for ATP.

It belongs to the RecF family.

It localises to the cytoplasm. Functionally, the RecF protein is involved in DNA metabolism; it is required for DNA replication and normal SOS inducibility. RecF binds preferentially to single-stranded, linear DNA. It also seems to bind ATP. The sequence is that of DNA replication and repair protein RecF from Pelotomaculum thermopropionicum (strain DSM 13744 / JCM 10971 / SI).